Here is a 144-residue protein sequence, read N- to C-terminus: Small ribosomal subunit protein bS6 (144 aa).

The interval 95 to 144 (PVTTPSPMMQDDKSKPDENSRGTAAPTVNVADDSASGAQVVAAEENDTQS) is disordered. Basic and acidic residues predominate over residues 104–114 (QDDKSKPDENS).

The protein belongs to the bacterial ribosomal protein bS6 family.

Its function is as follows. Binds together with bS18 to 16S ribosomal RNA. The protein is Small ribosomal subunit protein bS6 of Nitrosomonas eutropha (strain DSM 101675 / C91 / Nm57).